The following is a 418-amino-acid chain: UDP-N-acetylglucosamine 1-carboxyvinyltransferase (418 aa).

22 to 23 is a binding site for phosphoenolpyruvate; that stretch reads KN. Arg91 contributes to the UDP-N-acetyl-alpha-D-glucosamine binding site. The active-site Proton donor is the Cys115. Cys115 carries the post-translational modification 2-(S-cysteinyl)pyruvic acid O-phosphothioketal. Residues 120 to 124, 160 to 163, Asp305, and Ile327 each bind UDP-N-acetyl-alpha-D-glucosamine; these read RPVDL and KVSV.

This sequence belongs to the EPSP synthase family. MurA subfamily.

Its subcellular location is the cytoplasm. The catalysed reaction is phosphoenolpyruvate + UDP-N-acetyl-alpha-D-glucosamine = UDP-N-acetyl-3-O-(1-carboxyvinyl)-alpha-D-glucosamine + phosphate. The protein operates within cell wall biogenesis; peptidoglycan biosynthesis. Cell wall formation. Adds enolpyruvyl to UDP-N-acetylglucosamine. The polypeptide is UDP-N-acetylglucosamine 1-carboxyvinyltransferase (Baumannia cicadellinicola subsp. Homalodisca coagulata).